Consider the following 160-residue polypeptide: uncharacterized protein (160 aa).

An N-terminal signal peptide occupies residues 1–29 (MCGLGIVPMVKPALFGMLILVIGTSTVQA).

This is an uncharacterized protein from Sinorhizobium fredii (strain NBRC 101917 / NGR234).